A 440-amino-acid chain; its full sequence is Xylose isomerase (440 aa).

Active-site residues include His100 and Asp103. Residues Glu231, Glu267, His270, Asp295, Asp306, Asp308, and Asp338 each coordinate Mg(2+).

It belongs to the xylose isomerase family. Homotetramer. Mg(2+) is required as a cofactor.

The protein resides in the cytoplasm. The catalysed reaction is alpha-D-xylose = alpha-D-xylulofuranose. The protein is Xylose isomerase of Burkholderia cenocepacia (strain ATCC BAA-245 / DSM 16553 / LMG 16656 / NCTC 13227 / J2315 / CF5610) (Burkholderia cepacia (strain J2315)).